The following is a 421-amino-acid chain: Histidine--tRNA ligase (421 aa).

It belongs to the class-II aminoacyl-tRNA synthetase family. Homodimer.

It localises to the cytoplasm. It carries out the reaction tRNA(His) + L-histidine + ATP = L-histidyl-tRNA(His) + AMP + diphosphate + H(+). This Coxiella burnetii (strain CbuG_Q212) (Coxiella burnetii (strain Q212)) protein is Histidine--tRNA ligase.